We begin with the raw amino-acid sequence, 387 residues long: Natterin-4 (387 aa).

The N-terminal stretch at 1–18 is a signal peptide; it reads MKLLVLLVTLLVLSWTSA. Residues 19-46 constitute a propeptide that is removed on maturation; that stretch reads EDVGDQEILQQHNEDNNHKSELGEAAPQ. Residues 31–40 show a composition bias toward basic and acidic residues; sequence NEDNNHKSEL. The interval 31 to 57 is disordered; that stretch reads NEDNNHKSELGEAAPQRTDNETSQLGQ.

This sequence belongs to the natterin family. In terms of processing, contains 4 disulfide bonds. As to expression, expressed by the venom gland.

The protein localises to the secreted. Inhibited by tissue-kallikrein inhibitor TKI and trasylol. Plasma kallikrein inhibitor PKSI527 and classical inhibitors of serine-, metallo-, thiol- or aspartate-peptidases evokes a minor inhibition of the peptide digestion. Shows nociceptive, edema-inducing and kininogenase activity with release of kallidin from low molecular weight kininogen. The cleavage occurs at Met-Lys bonds. This Thalassophryne nattereri (Copper Joe toadfish) protein is Natterin-4.